Here is a 359-residue protein sequence, read N- to C-terminus: Fe-S cluster assembly protein DRE2 (359 aa).

The interval 1 to 148 (MASTGRVLLL…KPDVAAQQAV (148 aa)) is N-terminal SAM-like domain. Disordered regions lie at residues 97–116 (NKAW…NDND) and 149–210 (PLKL…PSGV). Residues 149–246 (PLKLGRRKKE…EDELLGEDDM (98 aa)) form a linker region. The segment covering 152 to 164 (LGRRKKEKERRHP) has biased composition (basic residues). A compositionally biased stretch (polar residues) spans 167–183 (NDVTNGKVNAPSSNGVN). Residues 184-200 (ASTSTATATATTTTTTT) are compositionally biased toward low complexity. [2Fe-2S] cluster contacts are provided by Cys256, Cys267, Cys270, and Cys272. The tract at residues 256–272 (CRPKPGKRRRACKDCSC) is fe-S binding site A. [4Fe-4S] cluster-binding residues include Cys322, Cys325, Cys333, and Cys336. Short sequence motifs (cx2C motif) lie at residues 322–325 (CGNC) and 333–336 (CDGC). The segment at 322–336 (CGNCSLGDAFRCDGC) is fe-S binding site B.

Belongs to the anamorsin family. As to quaternary structure, monomer. Interacts with TAH18. Interacts with MIA40. [2Fe-2S] cluster serves as cofactor. Requires [4Fe-4S] cluster as cofactor.

Its subcellular location is the cytoplasm. The protein resides in the mitochondrion intermembrane space. Functionally, component of the cytosolic iron-sulfur (Fe-S) protein assembly (CIA) machinery required for the maturation of extramitochondrial Fe-S proteins. Part of an electron transfer chain functioning in an early step of cytosolic Fe-S biogenesis, facilitating the de novo assembly of a [4Fe-4S] cluster on the scaffold complex CFD1-NBP35. Electrons are transferred to DRE2 from NADPH via the FAD- and FMN-containing protein TAH18. TAH18-DRE2 are also required for the assembly of the diferric tyrosyl radical cofactor of ribonucleotide reductase (RNR), probably by providing electrons for reduction during radical cofactor maturation in the catalytic small subunit RNR2. The protein is Fe-S cluster assembly protein DRE2 of Blastomyces gilchristii (strain SLH14081) (Blastomyces dermatitidis).